Here is a 315-residue protein sequence, read N- to C-terminus: Cytochrome f (315 aa).

Residues 1–36 (MKQSLLSVLTKKSLRLLAALFLVVTSVFSLPQAAQA) form the signal peptide. Heme-binding residues include phenylalanine 37, cysteine 57, cysteine 60, and histidine 61. The helical transmembrane segment at 281–301 (IKWLMVFFSAIMISQTLLVLK) threads the bilayer.

This sequence belongs to the cytochrome f family. The 4 large subunits of the cytochrome b6-f complex are cytochrome b6, subunit IV (17 kDa polypeptide, PetD), cytochrome f and the Rieske protein, while the 4 small subunits are PetG, PetL, PetM and PetN. The complex functions as a dimer. Heme is required as a cofactor.

It is found in the cellular thylakoid membrane. In terms of biological role, component of the cytochrome b6-f complex, which mediates electron transfer between photosystem II (PSII) and photosystem I (PSI), cyclic electron flow around PSI, and state transitions. In Acaryochloris marina (strain MBIC 11017), this protein is Cytochrome f.